A 230-amino-acid chain; its full sequence is Demethylmenaquinone methyltransferase (230 aa).

Residues Thr-57, Asp-77, and 101–102 (DI) each bind S-adenosyl-L-methionine.

The protein belongs to the class I-like SAM-binding methyltransferase superfamily. MenG/UbiE family.

The enzyme catalyses a 2-demethylmenaquinol + S-adenosyl-L-methionine = a menaquinol + S-adenosyl-L-homocysteine + H(+). The protein operates within quinol/quinone metabolism; menaquinone biosynthesis; menaquinol from 1,4-dihydroxy-2-naphthoate: step 2/2. Its function is as follows. Methyltransferase required for the conversion of demethylmenaquinol (DMKH2) to menaquinol (MKH2). This Chlamydia pneumoniae (Chlamydophila pneumoniae) protein is Demethylmenaquinone methyltransferase.